We begin with the raw amino-acid sequence, 455 residues long: Angiopoietin-related protein 3 (455 aa).

The signal sequence occupies residues methionine 1 to alanine 16. Residues serine 17–lysine 165 form a sufficient to inhibit LPL lipase activity region. Positions serine 17–glycine 207 are sufficient to inhibit LIPG/EL phospholipase activity. Positions glutamate 32–glycine 56 are required for inhibition of LPL lipase activity. Positions leucine 85 to threonine 206 form a coiled coil. A glycan (N-linked (GlcNAc...) asparagine) is linked at asparagine 115. Residues glutamine 202 to leucine 242 form a disordered region. Over residues glutamine 209 to serine 220 the composition is skewed to polar residues. O-linked (GlcNAc) threonine glycosylation occurs at threonine 226. The N-linked (GlcNAc...) asparagine glycan is linked to asparagine 232. One can recognise a Fibrinogen C-terminal domain in the interval threonine 237–threonine 455. Cysteine 246 and cysteine 274 are disulfide-bonded. N-linked (GlcNAc...) asparagine glycans are attached at residues asparagine 296 and asparagine 357. A disulfide bridge connects residues cysteine 394 and cysteine 408.

Interacts with ANGPTL8. Interacts with ITGB3. In part proteolytically cleaved by proprotein convertases; proposed to be involved in activation. In primary hepatocytes is intracellularily predominantly processed by FURIN and extracellularily by FURIN and PCSK6/PACE4. In 18.5 dpc embryos 75% of protein is found to be processed compared to 25 % in adults. Predominantly expressed in liver, weakly expressed in kidney and lung. Expressed in podocytes (at protein level). Expressed in hypothalamic neurons (at protein level). Expressed in bone marrow sinusoidal endothelial cells (at protein level).

The protein resides in the secreted. It is found in the cell projection. It localises to the lamellipodium. In terms of biological role, acts in part as a hepatokine that is involved in regulation of lipid and glucose metabolism. Proposed to play a role in the trafficking of energy substrates to either storage or oxidative tissues in response to food intake. Has a stimulatory effect on plasma triglycerides (TG), which is achieved by suppressing plasma TG clearance via inhibition of LPL activity; the function seems to be specific for the feeding conditions. The inhibition of LPL activity appears to be an indirect mechanism involving recruitment of proprotein convertases PCSK6 and FURIN to LPL leading to cleavage and dissociation of LPL from the cell surface; the function does not require ANGPTL3 proteolytic cleavage but seems to be mediated by the N-terminal domain, and is not inhibited by GPIHBP1. Can inhibit endothelial lipase, causing increased plasma levels of high density lipoprotein (HDL) cholesterol and phospholipids; the cleaved N-terminal domain is more efficient than the uncleaved proprotein. Can bind to adipocytes to activate lipolysis, releasing free fatty acids and glycerol. Suppresses LPL specifically in oxidative tissues which is required to route very low density lipoprotein (VLDL)-TG to white adipose tissue (WAT) for storage in response to food; the function may involve cooperation with circulating, liver-derived ANGPTL8 and ANGPTL4 expression in WAT. Contributes to lower plasma levels of low density lipoprotein (LDL)-cholesterol by a mechanism that is independent of the canonical pathway implicating APOE and LDLR. May stimulate hypothalamic LPL activity. Its function is as follows. Involved in angiogenesis. Binds to endothelial cells via integrin alpha-V/beta-3 (ITGAV:ITGB3), activates FAK, MAPK and Akt signaling pathways and induces cell adhesion and cell migration. May increase the motility of podocytes. Secreted from podocytes, may modulate properties of glomerular endothelial cells involving integrin alpha-V/beta-3 and Akt signaling. May induce actin filament rearrangements in podocytes implicating integrin alpha-V/beta-3 and Rac1 activation. Binds to hematopoietic stem cells (HSC) and is involved in the regulation of HSC activity probably implicating down-regulation of IKZF1/IKAROS. The sequence is that of Angiopoietin-related protein 3 (Angptl3) from Mus musculus (Mouse).